We begin with the raw amino-acid sequence, 401 residues long: Formate-dependent phosphoribosylglycinamide formyltransferase (401 aa).

N(1)-(5-phospho-beta-D-ribosyl)glycinamide-binding positions include 22–23 and glutamate 82; that span reads EL. Residues arginine 115, lysine 157, 162–167, 197–200, and glutamate 205 contribute to the ATP site; these read SSGKGQ and EGFI. Positions 120 to 315 constitute an ATP-grasp domain; sequence RLAAESLGLP…EFELHARAIL (196 aa). Mg(2+) is bound by residues glutamate 274 and glutamate 286. Residues aspartate 293, lysine 362, and 369-370 each bind N(1)-(5-phospho-beta-D-ribosyl)glycinamide; that span reads RR.

It belongs to the PurK/PurT family. Homodimer.

The catalysed reaction is N(1)-(5-phospho-beta-D-ribosyl)glycinamide + formate + ATP = N(2)-formyl-N(1)-(5-phospho-beta-D-ribosyl)glycinamide + ADP + phosphate + H(+). The protein operates within purine metabolism; IMP biosynthesis via de novo pathway; N(2)-formyl-N(1)-(5-phospho-D-ribosyl)glycinamide from N(1)-(5-phospho-D-ribosyl)glycinamide (formate route): step 1/1. Its function is as follows. Involved in the de novo purine biosynthesis. Catalyzes the transfer of formate to 5-phospho-ribosyl-glycinamide (GAR), producing 5-phospho-ribosyl-N-formylglycinamide (FGAR). Formate is provided by PurU via hydrolysis of 10-formyl-tetrahydrofolate. The sequence is that of Formate-dependent phosphoribosylglycinamide formyltransferase from Cupriavidus taiwanensis (strain DSM 17343 / BCRC 17206 / CCUG 44338 / CIP 107171 / LMG 19424 / R1) (Ralstonia taiwanensis (strain LMG 19424)).